The chain runs to 442 residues: tRNA modification GTPase MnmE (442 aa).

The (6S)-5-formyl-5,6,7,8-tetrahydrofolate site is built by Arg-27, Glu-84, and Lys-124. The 146-residue stretch at 221–366 folds into the TrmE-type G domain; sequence GLHVVIVGAP…LLTNLQNFAE (146 aa). GTP-binding positions include 231 to 236, 250 to 256, and 275 to 278; these read NAGKSS, SEEAGTT, and DTAG. Ser-235 and Thr-256 together coordinate Mg(2+). Lys-442 is a (6S)-5-formyl-5,6,7,8-tetrahydrofolate binding site.

Belongs to the TRAFAC class TrmE-Era-EngA-EngB-Septin-like GTPase superfamily. TrmE GTPase family. In terms of assembly, homodimer. Heterotetramer of two MnmE and two MnmG subunits. The cofactor is K(+).

It is found in the cytoplasm. Exhibits a very high intrinsic GTPase hydrolysis rate. Involved in the addition of a carboxymethylaminomethyl (cmnm) group at the wobble position (U34) of certain tRNAs, forming tRNA-cmnm(5)s(2)U34. The protein is tRNA modification GTPase MnmE of Brucella anthropi (strain ATCC 49188 / DSM 6882 / CCUG 24695 / JCM 21032 / LMG 3331 / NBRC 15819 / NCTC 12168 / Alc 37) (Ochrobactrum anthropi).